We begin with the raw amino-acid sequence, 67 residues long: ATP synthase F(0) complex subunit 8 (67 aa).

Residues 8–24 form a helical membrane-spanning segment; that stretch reads TWFITILSMLITLFILF. An N6-acetyllysine; alternate modification is found at K54. K54 bears the N6-succinyllysine; alternate mark. K57 carries the post-translational modification N6-acetyllysine.

This sequence belongs to the ATPase protein 8 family. As to quaternary structure, component of the ATP synthase complex composed at least of ATP5F1A/subunit alpha, ATP5F1B/subunit beta, ATP5MC1/subunit c (homooctomer), MT-ATP6/subunit a, MT-ATP8/subunit 8, ATP5ME/subunit e, ATP5MF/subunit f, ATP5MG/subunit g, ATP5MK/subunit k, ATP5MJ/subunit j, ATP5F1C/subunit gamma, ATP5F1D/subunit delta, ATP5F1E/subunit epsilon, ATP5PF/subunit F6, ATP5PB/subunit b, ATP5PD/subunit d, ATP5PO/subunit OSCP. ATP synthase complex consists of a soluble F(1) head domain (subunits alpha(3) and beta(3)) - the catalytic core - and a membrane F(0) domain - the membrane proton channel (subunits c, a, 8, e, f, g, k and j). These two domains are linked by a central stalk (subunits gamma, delta, and epsilon) rotating inside the F1 region and a stationary peripheral stalk (subunits F6, b, d, and OSCP). Interacts with PRICKLE3.

The protein localises to the mitochondrion membrane. Subunit 8, of the mitochondrial membrane ATP synthase complex (F(1)F(0) ATP synthase or Complex V) that produces ATP from ADP in the presence of a proton gradient across the membrane which is generated by electron transport complexes of the respiratory chain. ATP synthase complex consist of a soluble F(1) head domain - the catalytic core - and a membrane F(1) domain - the membrane proton channel. These two domains are linked by a central stalk rotating inside the F(1) region and a stationary peripheral stalk. During catalysis, ATP synthesis in the catalytic domain of F(1) is coupled via a rotary mechanism of the central stalk subunits to proton translocation. In vivo, can only synthesize ATP although its ATP hydrolase activity can be activated artificially in vitro. Part of the complex F(0) domain. In Dugong dugon (Dugong), this protein is ATP synthase F(0) complex subunit 8.